A 997-amino-acid polypeptide reads, in one-letter code: Protein translocase subunit SecA (997 aa).

ATP is bound by residues Gln-102, 120–124 (GEGKT), and Asp-521. The interval 893–997 (PADASPNGVV…KYKKCHGAEA (105 aa)) is disordered. The span at 938-953 (AIEREFEKKKQQELSH) shows a compositional bias: basic and acidic residues. 4 residues coordinate Zn(2+): Cys-981, Cys-983, Cys-992, and His-993. The segment covering 987-997 (KKYKKCHGAEA) has biased composition (basic residues).

It belongs to the SecA family. In terms of assembly, monomer and homodimer. Part of the essential Sec protein translocation apparatus which comprises SecA, SecYEG and auxiliary proteins SecDF. Other proteins may also be involved. The cofactor is Zn(2+).

The protein resides in the cell inner membrane. It is found in the cytoplasm. The catalysed reaction is ATP + H2O + cellular proteinSide 1 = ADP + phosphate + cellular proteinSide 2.. Functionally, part of the Sec protein translocase complex. Interacts with the SecYEG preprotein conducting channel. Has a central role in coupling the hydrolysis of ATP to the transfer of proteins into and across the cell membrane, serving as an ATP-driven molecular motor driving the stepwise translocation of polypeptide chains across the membrane. This chain is Protein translocase subunit SecA, found in Acidobacterium capsulatum (strain ATCC 51196 / DSM 11244 / BCRC 80197 / JCM 7670 / NBRC 15755 / NCIMB 13165 / 161).